Here is a 609-residue protein sequence, read N- to C-terminus: UvrABC system protein C (609 aa).

Residues 16–94 form the GIY-YIG domain; that stretch reads HLPGVYRHLD…IKSLRPRYNI (79 aa). One can recognise a UVR domain in the interval 203 to 238; that stretch reads REVMDEIEARMLQASTELRFEEAAVLRDQMGSLSKV.

This sequence belongs to the UvrC family. As to quaternary structure, interacts with UvrB in an incision complex.

It localises to the cytoplasm. In terms of biological role, the UvrABC repair system catalyzes the recognition and processing of DNA lesions. UvrC both incises the 5' and 3' sides of the lesion. The N-terminal half is responsible for the 3' incision and the C-terminal half is responsible for the 5' incision. This Bordetella pertussis (strain Tohama I / ATCC BAA-589 / NCTC 13251) protein is UvrABC system protein C.